The sequence spans 243 residues: Thiocyanate hydrolase subunit gamma (243 aa).

The Co(3+) site is built by C128, C131, S132, and C133. Cysteine sulfinic acid (-SO2H) is present on C131. The residue at position 133 (C133) is a Cysteine sulfenic acid (-SOH).

Belongs to the nitrile hydratase subunit alpha family. In terms of assembly, heterododecamer consisting of 4 alpha, 4 beta, and 4 gamma subunits. It depends on Co(3+) as a cofactor.

It carries out the reaction thiocyanate + H2O + 2 H(+) = carbonyl sulfide + NH4(+). The protein operates within organosulfur degradation; thiocyanate degradation. Functionally, involved in the degradation of thiocyanate. The sequence is that of Thiocyanate hydrolase subunit gamma (scnC) from Thiobacillus thioparus.